An 872-amino-acid polypeptide reads, in one-letter code: DNA mismatch repair protein MutS (872 aa).

Residue 622 to 629 participates in ATP binding; the sequence is GPNMAGKS.

It belongs to the DNA mismatch repair MutS family.

Its function is as follows. This protein is involved in the repair of mismatches in DNA. It is possible that it carries out the mismatch recognition step. This protein has a weak ATPase activity. The protein is DNA mismatch repair protein MutS of Geobacter metallireducens (strain ATCC 53774 / DSM 7210 / GS-15).